A 357-amino-acid chain; its full sequence is NmrA-like family domain-containing oxidoreductase notA' (357 aa).

NADP(+) contacts are provided by residues 13–18, 39–43, 60–61, 81–83, K140, and 164–167; these read GATGAQ, RKPES, DG, TNS, and YMDV.

Belongs to the NmrA-type oxidoreductase family.

NmrA-like family domain-containing oxidoreductase; part of the gene cluster that mediates the biosynthesis of notoamide, a fungal indole alkaloid that belongs to a family of natural products containing a characteristic bicyclo[2.2.2]diazaoctane core. The first step of notoamide biosynthesis involves coupling of L-proline and L-tryptophan by the bimodular NRPS notE', to produce cyclo-L-tryptophan-L-proline called brevianamide F. The reverse prenyltransferase notF' then acts as a deoxybrevianamide E synthase and converts brevianamide F to deoxybrevianamide E via reverse prenylation at C-2 of the indole ring leading to the bicyclo[2.2.2]diazaoctane core. Deoxybrevianamide E is further hydroxylated at C-6 of the indole ring, likely catalyzed by the cytochrome P450 monooxygenase notG', to yield 6-hydroxy-deoxybrevianamide E. 6-hydroxy-deoxybrevianamide E is a specific substrate of the prenyltransferase notC' for normal prenylation at C-7 to produce 6-hydroxy-7-prenyl-deoxybrevianamide, also called notoamide S. As the proposed pivotal branching point in notoamide biosynthesis, notoamide S can be diverted to notoamide E through an oxidative pyran ring closure putatively catalyzed by either notH' cytochrome P450 monooxygenase or the notD' FAD-linked oxidoreductase. This step would be followed by an indole 2,3-epoxidation-initiated pinacol-like rearrangement catalyzed by the notB' FAD-dependent monooxygenase leading to the formation of notoamide C and notoamide D. On the other hand notoamide S is converted to notoamide T by notH' (or notD'), a bifunctional oxidase that also functions as the intramolecular Diels-Alderase responsible for generation of (-)-notoamide T. To generate antipodal (+)-notoaminide T, notH (or notD) in Aspergillus strain MF297-2 is expected to catalyze a Diels-Alder reaction leading to the opposite stereochemistry. The remaining oxidoreductase notD' (or notH') likely catalyzes the oxidative pyran ring formation to yield (-)-stephacidin A. The FAD-dependent monooxygenase notI' is highly similar to notB' and is predicted to catalyze a similar conversion from (-)-stephacidin A to (+)-notoamide B via the 2,3-epoxidation of (-)-stephacidin A followed by a pinacol-type rearrangement. Finally, it remains unclear which enzyme could be responsible for the final hydroxylation steps leading to notoamide A and sclerotiamide. This chain is NmrA-like family domain-containing oxidoreductase notA', found in Aspergillus versicolor.